The following is a 256-amino-acid chain: Homeobox protein TGIF2LX (256 aa).

The interval 1-45 (MEAAADSPAETRSRVEKDSRRVEKDSRRPKKDSPAKTQSPAQDTS) is disordered. The segment covering 9–34 (AETRSRVEKDSRRVEKDSRRPKKDSP) has biased composition (basic and acidic residues). Positions 35-45 (AKTQSPAQDTS) are enriched in polar residues. The segment at residues 62–125 (EHKKKRKGYL…INARRRILPD (64 aa)) is a DNA-binding region (homeobox; TALE-type). Positions 136–224 (VGHKTGKDAN…SSSPEPVSTE (89 aa)) are disordered. Over residues 166–179 (DNVQSLPLRSSPKG) the composition is skewed to polar residues. Residues 209–224 (VSNITSSSSPEPVSTE) show a composition bias toward low complexity.

It belongs to the TALE/TGIF homeobox family.

The protein resides in the nucleus. Its function is as follows. May have a transcription role in testis. This Papio hamadryas (Hamadryas baboon) protein is Homeobox protein TGIF2LX (TGIF2LX).